The following is a 202-amino-acid chain: Imidazoleglycerol-phosphate dehydratase (202 aa).

Belongs to the imidazoleglycerol-phosphate dehydratase family.

It localises to the cytoplasm. The catalysed reaction is D-erythro-1-(imidazol-4-yl)glycerol 3-phosphate = 3-(imidazol-4-yl)-2-oxopropyl phosphate + H2O. The protein operates within amino-acid biosynthesis; L-histidine biosynthesis; L-histidine from 5-phospho-alpha-D-ribose 1-diphosphate: step 6/9. This is Imidazoleglycerol-phosphate dehydratase from Nocardioides sp. (strain ATCC BAA-499 / JS614).